The chain runs to 240 residues: Uridylate kinase (240 aa).

13–16 lines the ATP pocket; that stretch reads KLSG. Residues 21–26 are involved in allosteric activation by GTP; the sequence is GEKGFG. Residue glycine 55 participates in UMP binding. The ATP site is built by glycine 56 and arginine 60. UMP-binding positions include aspartate 75 and 136–143; that span reads IGNPYFST. ATP is bound by residues asparagine 164, tyrosine 170, and aspartate 173.

The protein belongs to the UMP kinase family. As to quaternary structure, homohexamer.

The protein localises to the cytoplasm. The enzyme catalyses UMP + ATP = UDP + ADP. Its pathway is pyrimidine metabolism; CTP biosynthesis via de novo pathway; UDP from UMP (UMPK route): step 1/1. With respect to regulation, allosterically activated by GTP. Inhibited by UTP. Its function is as follows. Catalyzes the reversible phosphorylation of UMP to UDP. This chain is Uridylate kinase, found in Staphylococcus aureus (strain Newman).